A 374-amino-acid chain; its full sequence is Small ribosomal subunit protein uS4m (374 aa).

The S4 RNA-binding domain maps to 259-323; that stretch reads GRLENFLMRL…KKLYFFIKSK (65 aa).

It belongs to the universal ribosomal protein uS4 family.

The protein resides in the mitochondrion. In Acanthamoeba castellanii (Amoeba), this protein is Small ribosomal subunit protein uS4m (RPS4).